The sequence spans 277 residues: MSRKKEQQLRKYGTLVVLFIFQVQIFGFDVDNRPTTDVCSTHTILPGPKGDDGEKGDRGEVGKQGKVGPKGPKGNKGTVGDVGDQGMLGKIGPIGGKGDKGAKGISGVSGKKGKAGTVCDCGRYRRVVGQLNINVARLNTSIKFVKNVIAGIRETDEKFYYIVKEEKNYREALMHCRDRGGTLAMPKDEVTNALLADYISSSGLFRAFIGLNDMEKEGQFVYADSSPLQNYSNWKDGEPHDSTGHEDCVEMLSTGEWNDSECQVTIYFICEFLKKRK.

Positions 1–27 are cleaved as a signal peptide; sequence MSRKKEQQLRKYGTLVVLFIFQVQIFG. Positions 41-82 are disordered; it reads THTILPGPKGDDGEKGDRGEVGKQGKVGPKGPKGNKGTVGDV. Residues 49–63 are compositionally biased toward basic and acidic residues; it reads KGDDGEKGDRGEVGK. Residues 56–115 enclose the Collagen-like domain; the sequence is GDRGEVGKQGKVGPKGPKGNKGTVGDVGDQGMLGKIGPIGGKGDKGAKGISGVSGKKGKA. Positions 64-79 are enriched in low complexity; it reads QGKVGPKGPKGNKGTV. The C-type lectin domain maps to 155 to 271; sequence TDEKFYYIVK…CQVTIYFICE (117 aa). Disulfide bonds link Cys-176–Cys-270 and Cys-248–Cys-262. Asn-258 carries N-linked (GlcNAc...) asparagine glycosylation.

It belongs to the COLEC10/COLEC11 family. As to expression, widely expressed. Highly expressed in lung. Weakly expressed in larynx, syrinx and cranial air sac. Expressed throughout the lower gastrointestinal tract in increasing levels starting from a faint signal in duodenum and ending with relatively high signals in proctodeum, coprodeum and urodeum. In the upper part of the gastrointestinal tract, expressed in tongue, crop, and mucosa of the crop.

It localises to the secreted. Its subcellular location is the golgi apparatus. The protein localises to the cytoplasm. Its function is as follows. Lectin that binds to various sugars: galactose &gt; mannose = fucose &gt; N-acetylglucosamine &gt; N-acetylgalactosamine. Acts as a chemoattractant, probably involved in the regulation of cell migration. The polypeptide is Collectin-10 (COLEC10) (Gallus gallus (Chicken)).